A 248-amino-acid chain; its full sequence is Putative homeobox-leucine zipper protein HOX26 (248 aa).

Residues 50–118 (KKVAAAAVVA…GDEEGASRKK (69 aa)) form a disordered region. Positions 79–89 (RQRRSCKKGRR) are enriched in basic residues. Residues 114–173 (ASRKKLRLTGEQATLLEDSFRAHNILSHAEKQELAGKLGLSARQVEVWFQNRRARTKLKQ) constitute a DNA-binding region (homeobox). The tract at residues 172–216 (KQTEADCDLLRRWCDHLAADNARLRRDLAELRRSSSSPPVSGLAV) is leucine-zipper.

Belongs to the HD-ZIP homeobox family. Class II subfamily.

It is found in the nucleus. Probable transcription factor. The sequence is that of Putative homeobox-leucine zipper protein HOX26 (HOX26) from Oryza sativa subsp. japonica (Rice).